The primary structure comprises 195 residues: Auxin-induced protein AUX22 (195 aa).

Positions Leu13–Leu17 match the EAR-like (transcriptional repression) motif. The disordered stretch occupies residues Phe37–Thr60. The PB1 domain maps to Lys86–Asp174.

It belongs to the Aux/IAA family. Homodimers and heterodimers.

Its subcellular location is the nucleus. Functionally, aux/IAA proteins are short-lived transcriptional factors that function as repressors of early auxin response genes at low auxin concentrations. Repression is thought to result from the interaction with auxin response factors (ARFs), proteins that bind to the auxin-responsive promoter element (AuxRE). Formation of heterodimers with ARF proteins may alter their ability to modulate early auxin response genes expression. The chain is Auxin-induced protein AUX22 (AUX22) from Glycine max (Soybean).